Reading from the N-terminus, the 369-residue chain is NAD-dependent epimerase/dehydratase FUM13 (369 aa).

Position 176 (tyrosine 176) interacts with NADP(+).

It belongs to the NAD(P)-dependent epimerase/dehydratase family. Dihydroflavonol-4-reductase subfamily.

It functions in the pathway mycotoxin biosynthesis. NAD-dependent epimerase/dehydratase; part of the gene cluster that mediates the biosynthesis of fumonisins B1 (FB1), B2 (FB2), B3 (FB3), and B4 (FB4), which are carcinogenic mycotoxins. Within the pathway, FUM13 stereospecifically reduces the intermediate 3-keto intermediate 2-amino-3-oxo-12,16-dimethylicosane to the 3-hydroxyl product 2-amino-3-hydroxy-12,16-dimethylicosane. The biosynthesis starts with the FUM1-catalyzed carbon chain assembly from one molecule of acetyl-CoA, eight molecules of malonyl-CoA, and two molecules of methionine (in S-adenosyl form). The C18 polyketide chain is released from the enzyme by a nucleophilic attack of a carbanion, which is derived from R-carbon of alanine by decarboxylation, on the carbonyl carbon of polyketide acyl chain. This step is catalyzed by the pyridoxal 5'-phosphate-dependent aminoacyl transferase FUM8. The resultant 3-keto intermediate is then stereospecifically reduced to a 3-hydroxyl product by reductase FUM13. Subsequent oxidations at C-10 by the cytochrome P450 monooxygenase FUM2, C-14 and C-15 by FUM6, FUM12 or FUM15, tricarballylic esterification of the hydroxyl groups on C-14 and C-15 by acyltransferase FUM14, and C-5 hydroxylation by 2-keto-glutarate-dependent dioxygenase FUM3 furnish the biosynthesis of fumonisins. The tricarballylic moieties are most likely derived from the citric acid cycle, and their addition to the carbon backbone may involve FUM7, FUM10, FUM11 and FUM14. This is NAD-dependent epimerase/dehydratase FUM13 from Gibberella moniliformis (strain M3125 / FGSC 7600) (Maize ear and stalk rot fungus).